Consider the following 284-residue polypeptide: Four and a half LIM domains protein 5 (284 aa).

The segment at Cys-8–Cys-32 adopts a C4-type zinc-finger fold. LIM zinc-binding domains are found at residues Asn-39 to Ser-100, Lys-101 to Ala-160, His-161 to Asn-220, and Val-223 to Asp-283.

In terms of assembly, interacts with CREM (via the third LIM domain). Interacts (via second LIM domain) with SPAG8. As to expression, testis-specific (at protein level).

The protein localises to the nucleus. Functionally, may be involved in the regulation of spermatogenesis. Stimulates CREM transcriptional activity in a phosphorylation-independent manner. The chain is Four and a half LIM domains protein 5 (FHL5) from Homo sapiens (Human).